We begin with the raw amino-acid sequence, 455 residues long: MPTWEELYKNAIEKAIKSVPKVKGVLLGYNTNIDAIKYLDSKDLEERIIKAGKEEVIKYSEELPDKINTVSQLLGSILWSIRRGKAAELFVESCPVRFYMKRWGWNELRMGGQAGIMANLLGGVYGVPVIVHVPQLSRLQANLFLDGPIYVPTLENGEVKLIHPKEFSGDEENCIHYIYEFPRGFRVFEFEAPRENRFIGSADDYNTTLFIREEFRESFSEVIKNVQLAILSGLQALTKENYKEPFEIVKSNLEVLNEREIPVHLEFAFTPDEKVREEILNVLGMFYSVGLNEVELASIMEILGEKKLAKELLAHDPVDPIAVTEAMLKLAKKTGVKRIHFHTYGYYLALTEYKGEHVRDALLFAALAAAAKAMKGNITSLEEIREATSVPVNEKATQVEEKLRAEYGIKEGIGEVEGYQIAFIPTKIVAKPKSTVGIGDTISSSAFIGEFSFTL.

Residues 2 to 455 (PTWEELYKNA…AFIGEFSFTL (454 aa)) form the ADPK domain. D-glucose is bound by residues Asp-34, Glu-88, 112-113 (GQ), and His-176. An ADP-binding site is contributed by Glu-195. A Mg(2+)-binding site is contributed by Glu-266. Asn-292 contacts ADP. Mg(2+) is bound at residue Glu-295. ADP contacts are provided by residues 342 to 343 (HT), Val-429, and Gly-439. Position 440 (Asp-440) interacts with D-glucose. Asp-440 provides a ligand contact to Mg(2+). Asp-440 (proton acceptor) is an active-site residue.

This sequence belongs to the ADP-dependent glucokinase family. In terms of assembly, homodimer. Requires Mg(2+) as cofactor.

It localises to the cytoplasm. The catalysed reaction is D-glucose + ADP = D-glucose 6-phosphate + AMP + H(+). It carries out the reaction D-glucosamine + ADP = D-glucosamine 6-phosphate + AMP + H(+). The protein operates within carbohydrate degradation; glycolysis. Functionally, catalyzes the ADP-dependent phosphorylation of D-glucose to D-glucose 6-phosphate and glucosamine to glucosamine 6-phosphate. Can also use CDP as the phosphoryl group donor and D-1,5-anhydroglucitol as the phosphoryl group acceptor. This chain is ADP-dependent glucose/glucosamine kinase, found in Pyrococcus furiosus (strain ATCC 43587 / DSM 3638 / JCM 8422 / Vc1).